The sequence spans 329 residues: Prostaglandin reductase 1 (329 aa).

T18 bears the Phosphothreonine mark. S20 carries the phosphoserine modification. NADP(+) contacts are provided by residues 152-155, K178, Y193, N217, 239-245, 270-272, and N321; these read GAVG, CGAISVY, and FIV. Position 178 is an N6-(2-hydroxyisobutyryl)lysine; alternate (K178). Position 178 is an N6-acetyllysine; alternate (K178).

It belongs to the NADP-dependent oxidoreductase L4BD family. Monomer or homodimer. In terms of tissue distribution, detected in small intestine, kidney, liver, spleen and stomach (at protein level). Detected in small intestine, kidney and liver.

The protein localises to the cytoplasm. It catalyses the reaction 13,14-dihydro-15-oxo-prostaglandin E1 + NADP(+) = 15-oxoprostaglandin E1 + NADPH + H(+). It carries out the reaction 13,14-dihydro-15-oxo-prostaglandin E2 + NAD(+) = 15-oxoprostaglandin E2 + NADH + H(+). The catalysed reaction is 13,14-dihydro-15-oxo-prostaglandin F1alpha + NADP(+) = 15-oxoprostaglandin F1alpha + NADPH + H(+). The enzyme catalyses 13,14-dihydro-15-oxo-PGF2alpha + NADP(+) = 15-oxoprostaglandin F2alpha + NADPH + H(+). It catalyses the reaction leukotriene B4 + NADP(+) = 12-oxo-leukotriene B4 + NADPH + H(+). It carries out the reaction 20-hydroxy-leukotriene B4 + NADP(+) = 12-oxo-20-hydroxy-leukotriene B4 + NADPH + H(+). The catalysed reaction is 6-trans-leukotriene B4 + NADP(+) = 12-oxo-(5S)-hydroxy-(6E,8E,10E,14Z)-eicosatetraenoate + NADPH + H(+). The enzyme catalyses (5S,12S)-dihydroxy-(6E,10E,12E,14Z)-eicosatetraenoate + NADP(+) = 12-oxo-(5S)-hydroxy-(6E,8E,10E,14Z)-eicosatetraenoate + NADPH + H(+). It catalyses the reaction an n-alkanal + NADP(+) = an alk-2-enal + NADPH + H(+). It carries out the reaction hexanal + NADP(+) = (E)-hex-2-enal + NADPH + H(+). The catalysed reaction is octanal + NADP(+) = (2E)-octenal + NADPH + H(+). The enzyme catalyses decanal + NADP(+) = (2E)-decenal + NADPH + H(+). It catalyses the reaction dodecanal + NADP(+) = (2E)-dodecenal + NADPH + H(+). It carries out the reaction 4-hydroxynonanal + NADP(+) = (E)-4-hydroxynon-2-enal + NADPH + H(+). The catalysed reaction is pentan-2-one + NADP(+) = (E)-pent-3-en-2-one + NADPH + H(+). The enzyme catalyses nonan-2-one + NADP(+) = (3E)-nonen-2-one + NADPH + H(+). Functionally, NAD(P)H-dependent oxidoreductase involved in metabolic inactivation of pro- and anti-inflammatory eicosanoids: prostaglandins (PG), leukotrienes (LT) and lipoxins (LX). Catalyzes with high efficiency the reduction of the 13,14 double bond of 15-oxoPGs, including 15-oxo-PGE1, 15-oxo-PGE2, 15-oxo-PGF1-alpha and 15-oxo-PGF2-alpha. Catalyzes with lower efficiency the oxidation of the hydroxyl group at C12 of LTB4 and its derivatives, converting them into biologically less active 12-oxo-LTB4 metabolites. Reduces 15-oxo-LXA4 to 13,14 dihydro-15-oxo-LXA4, enhancing neutrophil recruitment at the inflammatory site. Plays a role in metabolic detoxification of alkenals and ketones. Reduces alpha,beta-unsaturated alkenals and ketones, particularly those with medium-chain length, showing highest affinity toward (2E)-decenal and (3E)-3-nonen-2-one. May inactivate 4-hydroxy-2-nonenal, a cytotoxic lipid constituent of oxidized low-density lipoprotein particles. In Cavia porcellus (Guinea pig), this protein is Prostaglandin reductase 1 (Ptgr1).